A 200-amino-acid chain; its full sequence is 3-isopropylmalate dehydratase small subunit (200 aa).

The protein belongs to the LeuD family. LeuD type 1 subfamily. As to quaternary structure, heterodimer of LeuC and LeuD.

It catalyses the reaction (2R,3S)-3-isopropylmalate = (2S)-2-isopropylmalate. Its pathway is amino-acid biosynthesis; L-leucine biosynthesis; L-leucine from 3-methyl-2-oxobutanoate: step 2/4. Its function is as follows. Catalyzes the isomerization between 2-isopropylmalate and 3-isopropylmalate, via the formation of 2-isopropylmaleate. This is 3-isopropylmalate dehydratase small subunit from Actinobacillus pleuropneumoniae serotype 7 (strain AP76).